A 503-amino-acid polypeptide reads, in one-letter code: MKNRLNVLLFLLILSTGLYLTRSFWQGWIVGAFSVLITITVVFIGIVIFLENRHPTKTLTWLMVLAVFPVVGFIFYLMFGQNHRKSKTFMKKALSDEEAFEKIEGNRQLNEEQLQKMGGHQQLLFRLAHRLANNPISFSTNTKVLTDGKETFAHIKQALRMATHHIHLEYYIVRDDEIGQEIKEILMQKAKEGIHVRFLYDGVGSWKLSKSYIQDLKQAGVEIVPFAPVKLPFINHTINYRNHRKIIVIDGTVGFVGGLNIGDEYLGKDPYFGFWRDTHLYVRGEAVRTLQLIFLRDWAHETGETILKPSYLSPALTNMKDDGGVQMIASGPDTRWEINKKLFFSMITSAKKSIWITSPYFIPDEDILSALKIAALSGIDVRILVPNRPDKRIVFHASRSYFPELLEAGVKVYEYTRGFLHSKIIIVDNEIASIGTSNMDMRSFHLNFEVNAFLYRTKSVTTLVSDFVYDLEHTNQIRFEQFRNRAWYYRVLESTCRLLSPLL.

3 helical membrane passes run 5–25 (LNVL…RSFW), 29–49 (IVGA…IVIF), and 59–79 (LTWL…YLMF). PLD phosphodiesterase domains follow at residues 238–265 (INYR…GDEY) and 416–443 (TRGF…DMRS). Active-site residues include histidine 243, lysine 245, aspartate 250, histidine 421, lysine 423, and aspartate 428.

This sequence belongs to the phospholipase D family. Cardiolipin synthase subfamily.

It localises to the cell membrane. The catalysed reaction is 2 a 1,2-diacyl-sn-glycero-3-phospho-(1'-sn-glycerol) = a cardiolipin + glycerol. In terms of biological role, catalyzes the reversible phosphatidyl group transfer from one phosphatidylglycerol molecule to another to form cardiolipin (CL) (diphosphatidylglycerol) and glycerol. The sequence is that of Cardiolipin synthase (cls) from Halalkalibacterium halodurans (strain ATCC BAA-125 / DSM 18197 / FERM 7344 / JCM 9153 / C-125) (Bacillus halodurans).